The primary structure comprises 193 residues: Large ribosomal subunit protein uL11 (193 aa).

It belongs to the universal ribosomal protein uL11 family. Part of the ribosomal stalk of the 50S ribosomal subunit. Interacts with L10 and the large rRNA to form the base of the stalk. L10 forms an elongated spine to which L12 dimers bind in a sequential fashion forming a multimeric L10(L12)X complex. One or more lysine residues are methylated.

In terms of biological role, forms part of the ribosomal stalk which helps the ribosome interact with GTP-bound translation factors. The sequence is that of Large ribosomal subunit protein uL11 from Mycoplasmopsis synoviae (strain 53) (Mycoplasma synoviae).